A 618-amino-acid chain; its full sequence is UvrABC system protein C (618 aa).

The GIY-YIG domain maps to 13 to 92; the sequence is DKPGVYLMKN…IKKYRPKYNI (80 aa). The UVR domain maps to 204–239; sequence LDIVENFKLNMEKAAENLEFEKAAMLRDKINIIEKI.

The protein belongs to the UvrC family. Interacts with UvrB in an incision complex.

The protein resides in the cytoplasm. Functionally, the UvrABC repair system catalyzes the recognition and processing of DNA lesions. UvrC both incises the 5' and 3' sides of the lesion. The N-terminal half is responsible for the 3' incision and the C-terminal half is responsible for the 5' incision. This chain is UvrABC system protein C, found in Clostridium botulinum (strain Okra / Type B1).